Here is an 856-residue protein sequence, read N- to C-terminus: Leucine--tRNA ligase (856 aa).

The short motif at 42 to 52 (PYPSGNLHMGH) is the 'HIGH' region element. The 'KMSKS' region signature appears at 617–621 (KMSKS). ATP is bound at residue lysine 620.

This sequence belongs to the class-I aminoacyl-tRNA synthetase family.

The protein localises to the cytoplasm. It catalyses the reaction tRNA(Leu) + L-leucine + ATP = L-leucyl-tRNA(Leu) + AMP + diphosphate. This chain is Leucine--tRNA ligase, found in Rippkaea orientalis (strain PCC 8801 / RF-1) (Cyanothece sp. (strain PCC 8801)).